The chain runs to 429 residues: 3-phosphoshikimate 1-carboxyvinyltransferase (429 aa).

3-phosphoshikimate is bound by residues K22, S23, and R27. K22 serves as a coordination point for phosphoenolpyruvate. Residues G94 and R122 each coordinate phosphoenolpyruvate. Residues S167, Q169, D315, and K342 each contribute to the 3-phosphoshikimate site. A phosphoenolpyruvate-binding site is contributed by Q169. Catalysis depends on D315, which acts as the Proton acceptor. Residues R346 and R388 each contribute to the phosphoenolpyruvate site.

It belongs to the EPSP synthase family. As to quaternary structure, monomer.

It localises to the cytoplasm. It carries out the reaction 3-phosphoshikimate + phosphoenolpyruvate = 5-O-(1-carboxyvinyl)-3-phosphoshikimate + phosphate. It participates in metabolic intermediate biosynthesis; chorismate biosynthesis; chorismate from D-erythrose 4-phosphate and phosphoenolpyruvate: step 6/7. Catalyzes the transfer of the enolpyruvyl moiety of phosphoenolpyruvate (PEP) to the 5-hydroxyl of shikimate-3-phosphate (S3P) to produce enolpyruvyl shikimate-3-phosphate and inorganic phosphate. This chain is 3-phosphoshikimate 1-carboxyvinyltransferase, found in Geobacter sulfurreducens (strain ATCC 51573 / DSM 12127 / PCA).